A 440-amino-acid chain; its full sequence is Chromosomal replication initiator protein DnaA (440 aa).

Residues 1–75 (MNPNQILENL…QSGNKASVLI (75 aa)) form a domain I, interacts with DnaA modulators region. The tract at residues 75 to 99 (IQAQSAKQSSKSTKIDIAHIKAQST) is domain II. The segment at 100–316 (ILNPSFTFES…GIIISLNAYA (217 aa)) is domain III, AAA+ region. ATP-binding residues include Gly146, Gly148, Lys149, and Thr150. A domain IV, binds dsDNA region spans residues 317 to 440 (TILGQEITLE…KNKILVKSQS (124 aa)).

This sequence belongs to the DnaA family. Oligomerizes as a right-handed, spiral filament on DNA at oriC.

The protein localises to the cytoplasm. In terms of biological role, plays an essential role in the initiation and regulation of chromosomal replication. ATP-DnaA binds to the origin of replication (oriC) to initiate formation of the DNA replication initiation complex once per cell cycle. Binds the DnaA box (a 9 base pair repeat at the origin) and separates the double-stranded (ds)DNA. Forms a right-handed helical filament on oriC DNA; dsDNA binds to the exterior of the filament while single-stranded (ss)DNA is stabiized in the filament's interior. The ATP-DnaA-oriC complex binds and stabilizes one strand of the AT-rich DNA unwinding element (DUE), permitting loading of DNA polymerase. After initiation quickly degrades to an ADP-DnaA complex that is not apt for DNA replication. Binds acidic phospholipids. The sequence is that of Chromosomal replication initiator protein DnaA from Campylobacter jejuni subsp. jejuni serotype O:6 (strain 81116 / NCTC 11828).